Consider the following 310-residue polypeptide: Ribosomal RNA small subunit methyltransferase H (310 aa).

Residues 40 to 42 (GGH), aspartate 59, phenylalanine 89, aspartate 104, and glutamine 111 contribute to the S-adenosyl-L-methionine site.

The protein belongs to the methyltransferase superfamily. RsmH family.

The protein localises to the cytoplasm. The catalysed reaction is cytidine(1402) in 16S rRNA + S-adenosyl-L-methionine = N(4)-methylcytidine(1402) in 16S rRNA + S-adenosyl-L-homocysteine + H(+). Its function is as follows. Specifically methylates the N4 position of cytidine in position 1402 (C1402) of 16S rRNA. In Amoebophilus asiaticus (strain 5a2), this protein is Ribosomal RNA small subunit methyltransferase H.